A 180-amino-acid chain; its full sequence is ATP synthase subunit delta (180 aa).

This sequence belongs to the ATPase delta chain family. In terms of assembly, F-type ATPases have 2 components, F(1) - the catalytic core - and F(0) - the membrane proton channel. F(1) has five subunits: alpha(3), beta(3), gamma(1), delta(1), epsilon(1). F(0) has three main subunits: a(1), b(2) and c(10-14). The alpha and beta chains form an alternating ring which encloses part of the gamma chain. F(1) is attached to F(0) by a central stalk formed by the gamma and epsilon chains, while a peripheral stalk is formed by the delta and b chains.

Its subcellular location is the cell membrane. F(1)F(0) ATP synthase produces ATP from ADP in the presence of a proton or sodium gradient. F-type ATPases consist of two structural domains, F(1) containing the extramembraneous catalytic core and F(0) containing the membrane proton channel, linked together by a central stalk and a peripheral stalk. During catalysis, ATP synthesis in the catalytic domain of F(1) is coupled via a rotary mechanism of the central stalk subunits to proton translocation. Functionally, this protein is part of the stalk that links CF(0) to CF(1). It either transmits conformational changes from CF(0) to CF(1) or is implicated in proton conduction. This Pediococcus pentosaceus (strain ATCC 25745 / CCUG 21536 / LMG 10740 / 183-1w) protein is ATP synthase subunit delta.